We begin with the raw amino-acid sequence, 84 residues long: Cell division topological specificity factor (84 aa).

Belongs to the MinE family.

Its function is as follows. Prevents the cell division inhibition by proteins MinC and MinD at internal division sites while permitting inhibition at polar sites. This ensures cell division at the proper site by restricting the formation of a division septum at the midpoint of the long axis of the cell. The protein is Cell division topological specificity factor of Cupriavidus metallidurans (strain ATCC 43123 / DSM 2839 / NBRC 102507 / CH34) (Ralstonia metallidurans).